Reading from the N-terminus, the 714-residue chain is Calpain-1 catalytic subunit (714 aa).

In terms of domain architecture, Calpain catalytic spans 55 to 354; the sequence is LFRDEAFPPV…FTRLEICNLT (300 aa). The Ca(2+) site is built by glutamine 109 and aspartate 114. Residues cysteine 115, histidine 272, and asparagine 296 contribute to the active site. Positions 316, 318, and 323 each coordinate Ca(2+). The residue at position 354 (threonine 354) is a Phosphothreonine. Residues 355–526 are domain III; that stretch reads PDALKSRTIR…KSAGTAELDD (172 aa). A linker region spans residues 527–542; it reads QIQANLPDEQVLSEEE. EF-hand domains are found at residues 541–576, 585–618, 615–650, and 680–714; these read EEIDENFKALFRQLAGEDMETSVKELRTILNRIISK, FSLESCRSMVNLMDRDGNGKLGLVEFNILWNRIR, NRIRNYLSIFRKFDLDKSGSMSAYEMRMAIESAGFK, and VRLETMFRFFKTLDTDLDGVVTFDLFKWLQLTMFA. The interval 543 to 713 is domain IV; sequence IDENFKALFR…LFKWLQLTMF (171 aa). Ca(2+) is bound by residues aspartate 598, aspartate 600, asparagine 602, lysine 604, glutamate 609, aspartate 628, aspartate 630, serine 632, serine 634, and glutamate 639.

The protein belongs to the peptidase C2 family. In terms of assembly, forms a heterodimer with a small (regulatory) subunit CAPNS1. The cofactor is Ca(2+). Undergoes calcium-induced successive autoproteolytic cleavages that generate a membrane-bound 78 kDa active form and an intracellular 75 kDa active form. Calpastatin reduces with high efficiency the transition from 78 kDa to 75 kDa calpain forms.

It is found in the cytoplasm. It localises to the cell membrane. The enzyme catalyses Broad endopeptidase specificity.. With respect to regulation, activated by micromolar concentrations of calcium and inhibited by calpastatin. In terms of biological role, calcium-regulated non-lysosomal thiol-protease which catalyzes limited proteolysis of substrates involved in cytoskeletal remodeling and signal transduction. Proteolytically cleaves CTBP1. Cleaves and activates caspase-7 (CASP7). This Pongo abelii (Sumatran orangutan) protein is Calpain-1 catalytic subunit.